Here is a 426-residue protein sequence, read N- to C-terminus: Protein CgeD (426 aa).

To B.subtilis spore coat polysaccharide biosynthesis protein SpsA.

In terms of biological role, may be involved in maturation of the outermost layer of the spore. The polypeptide is Protein CgeD (cgeD) (Bacillus subtilis (strain 168)).